Reading from the N-terminus, the 330-residue chain is Anthranilate phosphoribosyltransferase (330 aa).

Residues Gly-77, 80–81, Thr-85, 87–90, 105–113, and Ser-117 each bind 5-phospho-alpha-D-ribose 1-diphosphate; these read GD, NIST, and KHGNKAVSS. Gly-77 is an anthranilate binding site. Ser-89 contributes to the Mg(2+) binding site. Position 108 (Asn-108) interacts with anthranilate. An anthranilate-binding site is contributed by Arg-163. 2 residues coordinate Mg(2+): Asp-222 and Glu-223.

It belongs to the anthranilate phosphoribosyltransferase family. Homodimer. The cofactor is Mg(2+).

The catalysed reaction is N-(5-phospho-beta-D-ribosyl)anthranilate + diphosphate = 5-phospho-alpha-D-ribose 1-diphosphate + anthranilate. It participates in amino-acid biosynthesis; L-tryptophan biosynthesis; L-tryptophan from chorismate: step 2/5. Functionally, catalyzes the transfer of the phosphoribosyl group of 5-phosphorylribose-1-pyrophosphate (PRPP) to anthranilate to yield N-(5'-phosphoribosyl)-anthranilate (PRA). This chain is Anthranilate phosphoribosyltransferase, found in Pelagibacter ubique (strain HTCC1062).